The chain runs to 121 residues: Large ribosomal subunit protein eL18 (121 aa).

It belongs to the eukaryotic ribosomal protein eL18 family. As to quaternary structure, part of the 50S ribosomal subunit.

In Thermococcus kodakarensis (strain ATCC BAA-918 / JCM 12380 / KOD1) (Pyrococcus kodakaraensis (strain KOD1)), this protein is Large ribosomal subunit protein eL18.